The chain runs to 237 residues: MOB kinase activator 2 (237 aa).

Positions 1–21 (MDWLMGKSKAKPNGKKPAAEE) are disordered. The Zn(2+) site is built by Cys-78, Cys-83, His-157, and His-162. Residues 217-229 (GGSGDGAGSGGPG) are compositionally biased toward gly residues. Residues 217–237 (GGSGDGAGSGGPGAQNHVKER) are disordered.

The protein belongs to the MOB1/phocein family. As to quaternary structure, binds STK38 and STK38L. Phosphorylated.

The protein localises to the nucleus. The protein resides in the cytoplasm. It is found in the perinuclear region. Stimulates the autophosphorylation and kinase activity of STK38 and STK38L. This chain is MOB kinase activator 2 (MOB2), found in Homo sapiens (Human).